Consider the following 537-residue polypeptide: MSTAVRPDEISAILRKQLSGFDSEVDVYDVGTVLQVGDGIARIYGLSKVAAGELVEFPHNVTGMVLNLEEDNVGAVLFGSSDLIKEGDTVKRTKILASIPVGEAMLGRVINPLGEPIDGKGAIKTEIRLPLERRAPGVIFRHPVKEPLQTGLKAIDSMIPIGRGQRELIIGDRQTGKTAVAIDTIINQKASHTKEAQEKGAKPVYCIYVATGQKASTVAQVVNILEKHGAMEYTTVISATASDPAPLQFISPYAGATLGEYFRDTGRHALVIYDDLSKQAVAYRQVSLLLRRPPGREAYPGDVFYLHSRLLERAARITNDDALAKQMNDLPDSIKPMAKGGGSLTALPIIETQAGDVSAYIPTNVISITDGQIFLESNLFNSGQRPAINVGISVSRVGGSAQIKGMKKVAGTLRLDLAQYRELEAFAKFGSDLDKATQAQLTRGGRLVEILKQGQYVPMAVEKQVAILFVGTQGILDTLPANLVRKFEVAFLEMLELKHKDILNTIATAGQMDADTQKKLRQVAEQFLETFKQANVK.

171 to 178 (GDRQTGKT) contacts ATP.

Belongs to the ATPase alpha/beta chains family. In terms of assembly, F-type ATPases have 2 components, CF(1) - the catalytic core - and CF(0) - the membrane proton channel. CF(1) has five subunits: alpha(3), beta(3), gamma(1), delta(1), epsilon(1). CF(0) has four main subunits: a, b, b' and c.

It is found in the cell inner membrane. It catalyses the reaction ATP + H2O + 4 H(+)(in) = ADP + phosphate + 5 H(+)(out). In terms of biological role, produces ATP from ADP in the presence of a proton gradient across the membrane. The alpha chain is a regulatory subunit. In Chloroherpeton thalassium (strain ATCC 35110 / GB-78), this protein is ATP synthase subunit alpha.